The primary structure comprises 477 residues: Argininosuccinate lyase (477 aa).

The protein belongs to the lyase 1 family. Argininosuccinate lyase subfamily.

The protein localises to the cytoplasm. It carries out the reaction 2-(N(omega)-L-arginino)succinate = fumarate + L-arginine. It participates in amino-acid biosynthesis; L-arginine biosynthesis; L-arginine from L-ornithine and carbamoyl phosphate: step 3/3. This is Argininosuccinate lyase from Acinetobacter baumannii (strain AB307-0294).